Here is a 440-residue protein sequence, read N- to C-terminus: Tuliposide B-converting enzyme 1, amyloplastic (440 aa).

The transit peptide at 1–58 (MSIVSFCSSLPAGPHGFKHGRGTRDMVHMPCIVRRTARSPAQACRLLRWNKYHCAAVP) directs the protein to the amyloplast. Residue S232 is the Acyl-ester intermediate of the active site. Residues D325 and H357 each act as charge relay system in the active site.

This sequence belongs to the AB hydrolase superfamily. Homodimer. Post-translationally, not glycosylated. Expressed in the pollen grains.

It is found in the plastid. It localises to the amyloplast. The catalysed reaction is 6-tuliposide B = tulipalin B + D-glucose. Its activity is regulated as follows. Inhibited by Ag(+), Cu(2+), Fe(2+), Hg(2+), V(3+) and phenylmethylsulfonyl fluoride (PMSF). Its function is as follows. Lactone-forming carboxylesterase, specifically catalyzing intramolecular transesterification, but not hydrolysis. Involved in the biosynthesis of tulipalins, defensive chemicals that show antimicrobial activities against a broad range of strains of bacteria and fungi. Substrates are 6-tuliposide B &gt; 6-tuliposide A. The chain is Tuliposide B-converting enzyme 1, amyloplastic from Tulipa gesneriana (Garden tulip).